The following is a 131-amino-acid chain: Glycine cleavage system H protein (131 aa).

In terms of domain architecture, Lipoyl-binding spans threonine 24–glutamate 106. Lysine 65 is modified (N6-lipoyllysine).

This sequence belongs to the GcvH family. In terms of assembly, the glycine cleavage system is composed of four proteins: P, T, L and H. (R)-lipoate serves as cofactor.

Its function is as follows. The glycine cleavage system catalyzes the degradation of glycine. The H protein shuttles the methylamine group of glycine from the P protein to the T protein. The polypeptide is Glycine cleavage system H protein (Mycobacteroides abscessus (strain ATCC 19977 / DSM 44196 / CCUG 20993 / CIP 104536 / JCM 13569 / NCTC 13031 / TMC 1543 / L948) (Mycobacterium abscessus)).